Here is a 388-residue protein sequence, read N- to C-terminus: Probable serine/threonine-protein kinase PBL20 (388 aa).

A lipid anchor (S-palmitoyl cysteine) is attached at Cys-3. The region spanning 91-372 (FSRKLKIGEG…FVVESLTNII (282 aa)) is the Protein kinase domain. ATP-binding positions include 97-105 (IGEGGFGSV) and Lys-128. The active-site Proton acceptor is Asp-221.

This sequence belongs to the protein kinase superfamily. Ser/Thr protein kinase family.

It localises to the cell membrane. The enzyme catalyses L-seryl-[protein] + ATP = O-phospho-L-seryl-[protein] + ADP + H(+). It catalyses the reaction L-threonyl-[protein] + ATP = O-phospho-L-threonyl-[protein] + ADP + H(+). May be involved in plant defense signaling. In Arabidopsis thaliana (Mouse-ear cress), this protein is Probable serine/threonine-protein kinase PBL20.